Reading from the N-terminus, the 553-residue chain is Methyl-coenzyme M reductase II subunit alpha (553 aa).

A coenzyme F430-binding site is contributed by Gln150. Residues Arg228, 259–260 (KH), and Arg273 each bind coenzyme B. His260 is modified (pros-methylhistidine). Arg274 bears the 5-methylarginine mark. Residue Tyr335 coordinates coenzyme M. Position 402 is a 2-methylglutamine (Gln402). A coenzyme M-binding site is contributed by Tyr446. A 1-thioglycine modification is found at Gly447. (Z)-2,3-didehydroaspartate is present on Asp452. Cys454 is modified (S-methylcysteine).

It belongs to the methyl-coenzyme M reductase alpha subunit family. As to quaternary structure, MCR is a hexamer of two alpha, two beta, and two gamma chains, forming a dimer of heterotrimers. Requires coenzyme F430 as cofactor. The alpha subunit contains six modified amino acids near the active site region. Is methylated on His-260, Arg-274, Gln-402 and Cys-454, probably by the action of specific S-adenosylmethionine-dependent methyltransferases. Also contains a thioglycine at position 447, forming a thiopeptide bond. Contains a didehydroaspartate residue at position 452. The methylation on C5 of Arg-274 is a post-translational methylation not essential in vivo, but which plays a role for the stability and structural integrity of MCR.

It carries out the reaction coenzyme B + methyl-coenzyme M = methane + coenzyme M-coenzyme B heterodisulfide. It functions in the pathway one-carbon metabolism; methyl-coenzyme M reduction; methane from methyl-coenzyme M: step 1/1. Functionally, component of the methyl-coenzyme M reductase (MCR) I that catalyzes the reductive cleavage of methyl-coenzyme M (CoM-S-CH3 or 2-(methylthio)ethanesulfonate) using coenzyme B (CoB or 7-mercaptoheptanoylthreonine phosphate) as reductant which results in the production of methane and the mixed heterodisulfide of CoB and CoM (CoM-S-S-CoB). This is the final step in methanogenesis. In Methanothermobacter thermautotrophicus (strain ATCC 29096 / DSM 1053 / JCM 10044 / NBRC 100330 / Delta H) (Methanobacterium thermoautotrophicum), this protein is Methyl-coenzyme M reductase II subunit alpha (mrtA).